Reading from the N-terminus, the 1202-residue chain is Adenine-specific methyltransferase PglX (1202 aa).

The protein belongs to the methyltransferase superfamily. PglX adenine methyltransferase family.

The catalysed reaction is a 2'-deoxyadenosine in DNA + S-adenosyl-L-methionine = an N(6)-methyl-2'-deoxyadenosine in DNA + S-adenosyl-L-homocysteine + H(+). BREX systems (bacteriophage exclusion) provide immunity against bacteriophage. Part of a type 1 BREX system which protects against dsDNA phage. This system allows phage adsorption but prevents phage DNA replication, without degradation of the phage DNA. Methylation of bacterial DNA by this protein guides self/non-self discrimination. In terms of biological role, probably methylates the adenine in the fifth position of the hexamer 5'-ACRCAG-3' in genomic DNA. N(6)-methylated adenine on the fifth position of 5'-ACRCAG-3' is found in the genome; there are 1906 sites in the genomic DNA. The protein is Adenine-specific methyltransferase PglX of Lacticaseibacillus casei (strain Zhang) (Lactobacillus casei).